The primary structure comprises 331 residues: L-lactate dehydrogenase A chain (331 aa).

Residues 29–57 and R98 contribute to the NAD(+) site; that span reads GMVGMASAISILLKDLCDELAMVDVMEDK. Residues R105, N137, and R168 each coordinate substrate. An NAD(+)-binding site is contributed by N137. The active-site Proton acceptor is the H192. T247 provides a ligand contact to substrate.

It belongs to the LDH/MDH superfamily. LDH family. In terms of assembly, homotetramer.

The protein localises to the cytoplasm. It catalyses the reaction (S)-lactate + NAD(+) = pyruvate + NADH + H(+). The protein operates within fermentation; pyruvate fermentation to lactate; (S)-lactate from pyruvate: step 1/1. In terms of biological role, interconverts simultaneously and stereospecifically pyruvate and lactate with concomitant interconversion of NADH and NAD(+). This is L-lactate dehydrogenase A chain (ldha) from Champsocephalus gunnari (Mackerel icefish).